The chain runs to 319 residues: Acetyl-coenzyme A carboxylase carboxyl transferase subunit alpha (319 aa).

Residues 39-293 (RLQKKSNDLT…KAVLEKQLHE (255 aa)) enclose the CoA carboxyltransferase C-terminal domain.

It belongs to the AccA family. Acetyl-CoA carboxylase is a heterohexamer composed of biotin carboxyl carrier protein (AccB), biotin carboxylase (AccC) and two subunits each of ACCase subunit alpha (AccA) and ACCase subunit beta (AccD).

It is found in the cytoplasm. The enzyme catalyses N(6)-carboxybiotinyl-L-lysyl-[protein] + acetyl-CoA = N(6)-biotinyl-L-lysyl-[protein] + malonyl-CoA. It participates in lipid metabolism; malonyl-CoA biosynthesis; malonyl-CoA from acetyl-CoA: step 1/1. Component of the acetyl coenzyme A carboxylase (ACC) complex. First, biotin carboxylase catalyzes the carboxylation of biotin on its carrier protein (BCCP) and then the CO(2) group is transferred by the carboxyltransferase to acetyl-CoA to form malonyl-CoA. The chain is Acetyl-coenzyme A carboxylase carboxyl transferase subunit alpha from Neisseria meningitidis serogroup B (strain ATCC BAA-335 / MC58).